Reading from the N-terminus, the 299-residue chain is Elongation factor Ts (299 aa).

The tract at residues 82 to 85 (TDFV) is involved in Mg(2+) ion dislocation from EF-Tu.

This sequence belongs to the EF-Ts family.

It localises to the cytoplasm. Functionally, associates with the EF-Tu.GDP complex and induces the exchange of GDP to GTP. It remains bound to the aminoacyl-tRNA.EF-Tu.GTP complex up to the GTP hydrolysis stage on the ribosome. This is Elongation factor Ts from Dechloromonas aromatica (strain RCB).